The primary structure comprises 153 residues: Movement protein (153 aa).

The tract at residues 107-153 (SSSARPLPQQPAPSLTSWTPIAKHLHSHQQSISSQSPKLVRGASQRR) is disordered.

This sequence belongs to the luteoviruses movement protein family.

In terms of biological role, transports viral genome to neighboring plant cells directly through plasmosdesmata, without any budding. The movement protein allows efficient cell to cell propagation, by bypassing the host cell wall barrier. The chain is Movement protein from Avena byzantina (Oat).